Consider the following 446-residue polypeptide: Phosphoglucosamine mutase (446 aa).

Ser103 functions as the Phosphoserine intermediate in the catalytic mechanism. 4 residues coordinate Mg(2+): Ser103, Asp242, Asp244, and Asp246. The residue at position 103 (Ser103) is a Phosphoserine.

It belongs to the phosphohexose mutase family. Mg(2+) is required as a cofactor. In terms of processing, activated by phosphorylation.

It catalyses the reaction alpha-D-glucosamine 1-phosphate = D-glucosamine 6-phosphate. Catalyzes the conversion of glucosamine-6-phosphate to glucosamine-1-phosphate. This Vibrio campbellii (strain ATCC BAA-1116) protein is Phosphoglucosamine mutase.